The primary structure comprises 361 residues: Peptide chain release factor 1 (361 aa).

Residue Gln238 is modified to N5-methylglutamine.

It belongs to the prokaryotic/mitochondrial release factor family. In terms of processing, methylated by PrmC. Methylation increases the termination efficiency of RF1.

The protein localises to the cytoplasm. Its function is as follows. Peptide chain release factor 1 directs the termination of translation in response to the peptide chain termination codons UAG and UAA. In Mesomycoplasma hyopneumoniae (strain J / ATCC 25934 / NCTC 10110) (Mycoplasma hyopneumoniae), this protein is Peptide chain release factor 1.